The sequence spans 190 residues: Peptidyl-tRNA hydrolase (190 aa).

Residue Tyr-14 coordinates tRNA. His-19 (proton acceptor) is an active-site residue. The tRNA site is built by Tyr-64, Asn-66, and Asn-112.

This sequence belongs to the PTH family. Monomer.

The protein localises to the cytoplasm. It carries out the reaction an N-acyl-L-alpha-aminoacyl-tRNA + H2O = an N-acyl-L-amino acid + a tRNA + H(+). In terms of biological role, hydrolyzes ribosome-free peptidyl-tRNAs (with 1 or more amino acids incorporated), which drop off the ribosome during protein synthesis, or as a result of ribosome stalling. Functionally, catalyzes the release of premature peptidyl moieties from peptidyl-tRNA molecules trapped in stalled 50S ribosomal subunits, and thus maintains levels of free tRNAs and 50S ribosomes. This Chlorobium chlorochromatii (strain CaD3) protein is Peptidyl-tRNA hydrolase.